The chain runs to 434 residues: ATP phosphoribosyltransferase regulatory subunit (434 aa).

The protein belongs to the class-II aminoacyl-tRNA synthetase family. HisZ subfamily. As to quaternary structure, heteromultimer composed of HisG and HisZ subunits.

The protein localises to the cytoplasm. It participates in amino-acid biosynthesis; L-histidine biosynthesis; L-histidine from 5-phospho-alpha-D-ribose 1-diphosphate: step 1/9. Functionally, required for the first step of histidine biosynthesis. May allow the feedback regulation of ATP phosphoribosyltransferase activity by histidine. The sequence is that of ATP phosphoribosyltransferase regulatory subunit from Geobacter metallireducens (strain ATCC 53774 / DSM 7210 / GS-15).